Reading from the N-terminus, the 563-residue chain is MAMITGGELVVRTLIKAGVEHLFGLHGAHIDTIFQACLDHDVPIIDTRHEAAAGHAAEGYARAGAKLGVAGHGGRGIYQCGHAHCQRLAGSQGRCIPHPGSGALRDDETNTLQAGIDQVAMAAPITKWAHRVMATEHIPRLVMQAIRAALSAPRGPVLLDLPWDILMNQIDEDSVIIPDLVLSAHGARPDPADLDQALALLRKAERPVIVLGSEASRTARKTALSAFVAATGVPVFADYEGLSMLSGLPDAMRGGLVQNLYSFAKADAAPDLVLMLGARFGLNTGHGSGQLIPHSAQVIQVDPDACELGRLQGIALGIVADVGGTIEALAQATAQDAAWPDRGDWCAKVTDLAQERYASIAAKSSSEHALHPFHASQVIAKHVDAGVTVVADGALTYLWLSEVMSRVKPGGFLCHGYLGSMGVGFGTALGAQVADLEAGRRTILVTGDGSVGYSIGEFDTLVRKQLPLIVIIMNNQSWGATLHFQQLAVGPNRVTGTRLENGSYHGVAAAFGADGYHVDSVESFSAALAQALAHNRPACINVAVALDPIPPEELILIGMDPFA.

It belongs to the TPP enzyme family. A metal cation is required as a cofactor. Requires thiamine diphosphate as cofactor.

It carries out the reaction benzoin = 2 benzaldehyde. Its function is as follows. Cleavage of benzoin-anisoin acyloin linkage. In Pseudomonas fluorescens, this protein is Benzaldehyde lyase (bznB).